A 61-amino-acid chain; its full sequence is uncharacterized protein (61 aa).

The tract at residues 23–61 (VPTKWQDYKKPGPNQKYTSDGKKRRRIRRSQKSILGVRS) is disordered. Residues 44–53 (KKRRRIRRSQ) are compositionally biased toward basic residues.

This is an uncharacterized protein from Archaeoglobus fulgidus (strain ATCC 49558 / DSM 4304 / JCM 9628 / NBRC 100126 / VC-16).